The chain runs to 185 residues: Peptide deformylase (185 aa).

Fe cation is bound by residues C94 and H136. E137 is a catalytic residue. H140 is a Fe cation binding site.

The protein belongs to the polypeptide deformylase family. Fe(2+) serves as cofactor.

The enzyme catalyses N-terminal N-formyl-L-methionyl-[peptide] + H2O = N-terminal L-methionyl-[peptide] + formate. Functionally, removes the formyl group from the N-terminal Met of newly synthesized proteins. Requires at least a dipeptide for an efficient rate of reaction. N-terminal L-methionine is a prerequisite for activity but the enzyme has broad specificity at other positions. The polypeptide is Peptide deformylase (Chlorobium phaeobacteroides (strain BS1)).